The following is a 39-amino-acid chain: Phospholipase A2 (39 aa).

H36 is a catalytic residue.

It belongs to the phospholipase A2 family. Group III subfamily. Requires Ca(2+) as cofactor. In terms of tissue distribution, expressed by the venom gland.

Its subcellular location is the secreted. It catalyses the reaction a 1,2-diacyl-sn-glycero-3-phosphocholine + H2O = a 1-acyl-sn-glycero-3-phosphocholine + a fatty acid + H(+). PLA2 catalyzes the calcium-dependent hydrolysis of the 2-acyl groups in 3-sn-phosphoglycerides. The chain is Phospholipase A2 from Heloderma horridum horridum (Mexican beaded lizard).